A 356-amino-acid polypeptide reads, in one-letter code: Glutamine synthetase cytosolic isozyme (356 aa).

A GS beta-grasp domain is found at 19-99 (IIAEYIWIGG…VMCDAYTPAG (81 aa)). Residues 38–66 (RTLPGPVTDPSQLPKWNYDGSSTGQAPGE) are disordered. The region spanning 106–356 (KRHAAAKIFS…IADTTILWKP (251 aa)) is the GS catalytic domain.

It belongs to the glutamine synthetase family. Homooctamer.

The protein resides in the cytoplasm. It catalyses the reaction L-glutamate + NH4(+) + ATP = L-glutamine + ADP + phosphate + H(+). This is Glutamine synthetase cytosolic isozyme from Medicago sativa (Alfalfa).